Reading from the N-terminus, the 161-residue chain is Nucleotide-binding protein Bxeno_A3642 (161 aa).

Belongs to the YajQ family.

Its function is as follows. Nucleotide-binding protein. The protein is Nucleotide-binding protein Bxeno_A3642 of Paraburkholderia xenovorans (strain LB400).